The following is a 170-amino-acid chain: 6,7-dimethyl-8-ribityllumazine synthase 2 (170 aa).

Residues Trp25, 59–61 (AFE), and 83–85 (LVV) each bind 5-amino-6-(D-ribitylamino)uracil. The active-site Proton donor is the Arg91. Residue Ser116 coordinates 5-amino-6-(D-ribitylamino)uracil. His130 serves as a coordination point for (2S)-2-hydroxy-3-oxobutyl phosphate.

It belongs to the DMRL synthase family. Forms an icosahedral capsid composed of 60 subunits, arranged as a dodecamer of pentamers.

The catalysed reaction is (2S)-2-hydroxy-3-oxobutyl phosphate + 5-amino-6-(D-ribitylamino)uracil = 6,7-dimethyl-8-(1-D-ribityl)lumazine + phosphate + 2 H2O + H(+). It functions in the pathway cofactor biosynthesis; riboflavin biosynthesis; riboflavin from 2-hydroxy-3-oxobutyl phosphate and 5-amino-6-(D-ribitylamino)uracil: step 1/2. In terms of biological role, catalyzes the formation of 6,7-dimethyl-8-ribityllumazine by condensation of 5-amino-6-(D-ribitylamino)uracil with 3,4-dihydroxy-2-butanone 4-phosphate. This is the penultimate step in the biosynthesis of riboflavin. This is 6,7-dimethyl-8-ribityllumazine synthase 2 from Pseudomonas syringae pv. tomato (strain ATCC BAA-871 / DC3000).